Reading from the N-terminus, the 352-residue chain is Holliday junction branch migration complex subunit RuvB (352 aa).

Residues 13 to 201 are large ATPase domain (RuvB-L); it reads LPLRKKELRL…FGISQKIEFY (189 aa). ATP is bound by residues R41, G82, K85, T86, T87, 148–150, R191, Y201, and R238; that span reads EDF. T86 contributes to the Mg(2+) binding site. Residues 202-273 form a small ATPAse domain (RuvB-S) region; the sequence is NYDELKQILL…LIKKALNSYQ (72 aa). The interval 276–352 is head domain (RuvB-H); the sequence is DKGLDSLDRH…KYIDSKNDDF (77 aa). R330 and R335 together coordinate DNA.

This sequence belongs to the RuvB family. As to quaternary structure, homohexamer. Forms an RuvA(8)-RuvB(12)-Holliday junction (HJ) complex. HJ DNA is sandwiched between 2 RuvA tetramers; dsDNA enters through RuvA and exits via RuvB. An RuvB hexamer assembles on each DNA strand where it exits the tetramer. Each RuvB hexamer is contacted by two RuvA subunits (via domain III) on 2 adjacent RuvB subunits; this complex drives branch migration. In the full resolvosome a probable DNA-RuvA(4)-RuvB(12)-RuvC(2) complex forms which resolves the HJ.

It is found in the cytoplasm. It catalyses the reaction ATP + H2O = ADP + phosphate + H(+). Its function is as follows. The RuvA-RuvB-RuvC complex processes Holliday junction (HJ) DNA during genetic recombination and DNA repair, while the RuvA-RuvB complex plays an important role in the rescue of blocked DNA replication forks via replication fork reversal (RFR). RuvA specifically binds to HJ cruciform DNA, conferring on it an open structure. The RuvB hexamer acts as an ATP-dependent pump, pulling dsDNA into and through the RuvAB complex. RuvB forms 2 homohexamers on either side of HJ DNA bound by 1 or 2 RuvA tetramers; 4 subunits per hexamer contact DNA at a time. Coordinated motions by a converter formed by DNA-disengaged RuvB subunits stimulates ATP hydrolysis and nucleotide exchange. Immobilization of the converter enables RuvB to convert the ATP-contained energy into a lever motion, pulling 2 nucleotides of DNA out of the RuvA tetramer per ATP hydrolyzed, thus driving DNA branch migration. The RuvB motors rotate together with the DNA substrate, which together with the progressing nucleotide cycle form the mechanistic basis for DNA recombination by continuous HJ branch migration. Branch migration allows RuvC to scan DNA until it finds its consensus sequence, where it cleaves and resolves cruciform DNA. This is Holliday junction branch migration complex subunit RuvB from Prochlorococcus marinus (strain MIT 9301).